The following is a 33-amino-acid chain: Antimicrobial peptide MBP-1 (33 aa).

As to expression, predominantly in the embryo portion of the kernel.

The protein localises to the secreted. Inhibitor of both bacterial and fungal growth in vitro. This is Antimicrobial peptide MBP-1 from Zea mays (Maize).